A 563-amino-acid polypeptide reads, in one-letter code: Alpha-humulene synthase (563 aa).

Positions 316, 320, 461, and 469 each coordinate Mg(2+). Positions Asp316 to Asp320 match the DDXXD motif motif.

The protein belongs to the terpene synthase family. Tpsa subfamily. The cofactor is Mg(2+). Mn(2+) serves as cofactor. As to expression, expressed in trichomes, cones and young leaves.

It catalyses the reaction (2E,6E)-farnesyl diphosphate = alpha-humulene + diphosphate. It functions in the pathway sesquiterpene biosynthesis. Its pathway is secondary metabolite biosynthesis; terpenoid biosynthesis. Functionally, sesquiterpene synthase that catalyzes the formation of alpha-humulene. Can use farnesyl diphosphate (FPP) as substrate, but not geranyl diphosphate (GPP) or geranylgeranyl diphosphate (GGPP). The chain is Alpha-humulene synthase from Humulus lupulus (European hop).